A 254-amino-acid polypeptide reads, in one-letter code: Pre-miRNA 5'-monophosphate methyltransferase (254 aa).

One can recognise a Bin3-type SAM domain in the interval 34–254 (ENRLSLIPEA…DRSLLLFRRQ (221 aa)). S-adenosyl-L-methionine contacts are provided by residues Arg-36, Asn-66, Asp-99, and 124 to 125 (DI).

It belongs to the methyltransferase superfamily.

It is found in the cytoplasm. It carries out the reaction a 5'-end 5'-phospho-ribonucleoside-RNA + S-adenosyl-L-methionine = a 5'-end (5'-methylphospho)-ribonucleoside-RNA + S-adenosyl-L-homocysteine. It catalyses the reaction a 5'-end 5'-phospho-ribonucleoside-RNA + 2 S-adenosyl-L-methionine = a 5'-end (5'-bismethylphospho)-ribonucleoside-RNA + 2 S-adenosyl-L-homocysteine. Its function is as follows. O-methyltransferase that specifically monomethylates 5'-monophosphate of cytoplasmic histidyl tRNA (tRNA(His)), acting as a capping enzyme by protecting tRNA(His) from cleavage by DICER1. Also able, with less efficiently, to methylate the 5' monophosphate of a subset of pre-miRNAs, acting as a negative regulator of miRNA processing. The 5' monophosphate of pre-miRNAs is recognized by DICER1 and is required for pre-miRNAs processing: methylation at this position reduces the processing of pre-miRNAs by DICER1. Was also reported to mediate dimethylation of pre-miR-145; however dimethylation cannot be reproduced by another group which observes a monomethylation of pre-miR-145. The polypeptide is Pre-miRNA 5'-monophosphate methyltransferase (bcdin3d) (Danio rerio (Zebrafish)).